Reading from the N-terminus, the 249-residue chain is General transcription factor IIF subunit 2 (249 aa).

A2 is modified (N-acetylalanine). An N6-acetyllysine mark is found at K22, K33, and K137. S142 bears the Phosphoserine mark. DNA-binding residues include G227 and H229. S248 carries the phosphoserine modification.

The protein belongs to the TFIIF beta subunit family. Heterodimer of an alpha and a beta subunit. Interacts with HTATSF1 and URI1. Interacts with GPBP1. Interacts with GTF2B (via N-terminus); this interaction is inhibited in presence of GTF2F1. Part of TBP-based Pol II pre-initiation complex (PIC), in which Pol II core assembles with general transcription factors and other specific initiation factors including GTF2E1, GTF2E2, GTF2F1, GTF2F2, TCEA1, ERCC2, ERCC3, GTF2H2, GTF2H3, GTF2H4, GTF2H5, GTF2A1, GTF2A2, GTF2B and TBP; this large multi-subunit PIC complex mediates DNA unwinding and targets Pol II core to the transcription start site where the first phosphodiester bond forms.

It localises to the nucleus. Its function is as follows. TFIIF is a general transcription initiation factor that binds to RNA polymerase II and helps to recruit it to the initiation complex in collaboration with TFIIB. This Mus musculus (Mouse) protein is General transcription factor IIF subunit 2 (Gtf2f2).